Consider the following 53-residue polypeptide: Lantibiotic paenibacillin (53 aa).

The propeptide occupies 1 to 24; it reads MKVDQMFDLDLRKSYEASELSPQA. A24 carries the N-acetylalanine modification. S25 carries the 2,3-didehydroalanine (Ser) modification. 2,3-didehydrobutyrine occurs at positions 29 and 30. Positions 34–38 form a cross-link, lanthionine (Ser-Cys); that stretch reads SKAVC. 3 cross-links (beta-methyllanthionine (Thr-Cys)) span residues 40–43, 42–45, and 46–49; these read TLTC, TCIC, and TGSC. The lanthionine (Ser-Cys) cross-link spans 48 to 52; the sequence is SCSNC. Position 50 is a 2,3-didehydroalanine (Ser) (S50).

Maturation of lantibiotics involves the enzymatic conversion of Thr, and Ser into dehydrated AA and the formation of thioether bonds with cysteine. This is followed by membrane translocation and cleavage of the modified precursor. In terms of processing, the structure of the 2,3-didehydrobutyrines is not discussed in PubMed:17071789.

It is found in the secreted. In terms of biological role, lanthionine-containing peptide antibiotic (lantibiotic) active on Gram-positive bacteria. The bactericidal activity of lantibiotics is based on depolarization of energized bacterial cytoplasmic membranes, initiated by the formation of aqueous transmembrane pores. Lacks antibacterial activity against Gram-negative bacteria. The protein is Lantibiotic paenibacillin of Paenibacillus polymyxa (Bacillus polymyxa).